Consider the following 135-residue polypeptide: S-adenosylmethionine decarboxylase proenzyme (135 aa).

Serine 64 acts as the Schiff-base intermediate with substrate; via pyruvic acid in catalysis. Serine 64 is modified (pyruvic acid (Ser); by autocatalysis). The Proton acceptor; for processing activity role is filled by histidine 69. The active-site Proton donor; for catalytic activity is the cysteine 84.

This sequence belongs to the prokaryotic AdoMetDC family. Type 1 subfamily. In terms of assembly, heterotetramer of two alpha and two beta chains arranged as a dimer of alpha/beta heterodimers. Pyruvate serves as cofactor. In terms of processing, is synthesized initially as an inactive proenzyme. Formation of the active enzyme involves a self-maturation process in which the active site pyruvoyl group is generated from an internal serine residue via an autocatalytic post-translational modification. Two non-identical subunits are generated from the proenzyme in this reaction, and the pyruvate is formed at the N-terminus of the alpha chain, which is derived from the carboxyl end of the proenzyme. The post-translation cleavage follows an unusual pathway, termed non-hydrolytic serinolysis, in which the side chain hydroxyl group of the serine supplies its oxygen atom to form the C-terminus of the beta chain, while the remainder of the serine residue undergoes an oxidative deamination to produce ammonia and the pyruvoyl group blocking the N-terminus of the alpha chain.

The catalysed reaction is S-adenosyl-L-methionine + H(+) = S-adenosyl 3-(methylsulfanyl)propylamine + CO2. It functions in the pathway amine and polyamine biosynthesis; S-adenosylmethioninamine biosynthesis; S-adenosylmethioninamine from S-adenosyl-L-methionine: step 1/1. Functionally, catalyzes the decarboxylation of S-adenosylmethionine to S-adenosylmethioninamine (dcAdoMet), the propylamine donor required for the synthesis of the polyamines spermine and spermidine from the diamine putrescine. The polypeptide is S-adenosylmethionine decarboxylase proenzyme (Aquifex aeolicus (strain VF5)).